Here is a 163-residue protein sequence, read N- to C-terminus: NADH-quinone oxidoreductase subunit I (163 aa).

2 4Fe-4S ferredoxin-type domains span residues L53 to G83 and V94 to N123. Residues C63, C66, C69, C73, C103, C106, C109, and C113 each coordinate [4Fe-4S] cluster.

The protein belongs to the complex I 23 kDa subunit family. As to quaternary structure, NDH-1 is composed of 14 different subunits. Subunits NuoA, H, J, K, L, M, N constitute the membrane sector of the complex. [4Fe-4S] cluster serves as cofactor.

The protein resides in the cell inner membrane. The catalysed reaction is a quinone + NADH + 5 H(+)(in) = a quinol + NAD(+) + 4 H(+)(out). Its function is as follows. NDH-1 shuttles electrons from NADH, via FMN and iron-sulfur (Fe-S) centers, to quinones in the respiratory chain. The immediate electron acceptor for the enzyme in this species is believed to be ubiquinone. Couples the redox reaction to proton translocation (for every two electrons transferred, four hydrogen ions are translocated across the cytoplasmic membrane), and thus conserves the redox energy in a proton gradient. This Brucella abortus (strain S19) protein is NADH-quinone oxidoreductase subunit I.